The primary structure comprises 260 residues: NAD-capped RNA hydrolase NudC (260 aa).

R69 provides a ligand contact to substrate. Residues C98 and C101 each contribute to the Zn(2+) site. Residue E111 participates in substrate binding. Zn(2+)-binding residues include C116 and C119. Residue Y124 coordinates substrate. The region spanning 125-248 is the Nudix hydrolase domain; sequence PQIAPCIIVA…TVARRLIEDT (124 aa). Residues A158, E174, and E178 each coordinate a divalent metal cation. The short motif at 159–180 is the Nudix box element; sequence GFVEVGETLEQTVVREVMEESQ. Residue 192–199 participates in substrate binding; it reads QPWPFPHS. Position 219 (E219) interacts with a divalent metal cation. Position 241 (A241) interacts with substrate.

It belongs to the Nudix hydrolase family. NudC subfamily. Homodimer. Requires Mg(2+) as cofactor. Mn(2+) is required as a cofactor. Zn(2+) serves as cofactor.

The enzyme catalyses a 5'-end NAD(+)-phospho-ribonucleoside in mRNA + H2O = a 5'-end phospho-adenosine-phospho-ribonucleoside in mRNA + beta-nicotinamide D-ribonucleotide + 2 H(+). The catalysed reaction is NAD(+) + H2O = beta-nicotinamide D-ribonucleotide + AMP + 2 H(+). It catalyses the reaction NADH + H2O = reduced beta-nicotinamide D-ribonucleotide + AMP + 2 H(+). In terms of biological role, mRNA decapping enzyme that specifically removes the nicotinamide adenine dinucleotide (NAD) cap from a subset of mRNAs by hydrolyzing the diphosphate linkage to produce nicotinamide mononucleotide (NMN) and 5' monophosphate mRNA. The NAD-cap is present at the 5'-end of some mRNAs and stabilizes RNA against 5'-processing. Has preference for mRNAs with a 5'-end purine. Catalyzes the hydrolysis of a broad range of dinucleotide pyrophosphates. The chain is NAD-capped RNA hydrolase NudC from Pectobacterium atrosepticum (strain SCRI 1043 / ATCC BAA-672) (Erwinia carotovora subsp. atroseptica).